Here is a 537-residue protein sequence, read N- to C-terminus: Protoporphyrinogen oxidase 1, chloroplastic (537 aa).

Residues 1–34 (MELSLLRPTTQSLLPSFSKPNLRLNVYKPLRLRC) constitute a chloroplast transit peptide. Position 35 is an N-acetylserine (S35). FAD contacts are provided by residues 63–68 (GGGISG), 90–91 (EA), and 112–115 (GPNS). Positions 256-268 (RKNAPKAERDPRL) are enriched in basic and acidic residues. The disordered stretch occupies residues 256-275 (RKNAPKAERDPRLPKPQGQT). 511-513 (VAL) is an FAD binding site.

This sequence belongs to the protoporphyrinogen/coproporphyrinogen oxidase family. Protoporphyrinogen oxidase subfamily. It depends on FAD as a cofactor. As to expression, expressed at high levels in the leaves and at low levels in the roots and floral buds.

The protein localises to the plastid. Its subcellular location is the chloroplast. The enzyme catalyses protoporphyrinogen IX + 3 O2 = protoporphyrin IX + 3 H2O2. Its pathway is porphyrin-containing compound metabolism; protoporphyrin-IX biosynthesis; protoporphyrin-IX from protoporphyrinogen-IX: step 1/1. The protein operates within porphyrin-containing compound metabolism; chlorophyll biosynthesis. With respect to regulation, inhibited by acifluorfen. Its function is as follows. Catalyzes the 6-electron oxidation of protoporphyrinogen-IX to form protoporphyrin-IX. This Arabidopsis thaliana (Mouse-ear cress) protein is Protoporphyrinogen oxidase 1, chloroplastic (PPOX1).